The following is a 239-amino-acid chain: Aldehyde dehydrogenase, dimeric NADP-preferring (239 aa).

Cys30 is a catalytic residue.

It belongs to the aldehyde dehydrogenase family. As to quaternary structure, homodimer.

It localises to the cytoplasm. The catalysed reaction is an aldehyde + NAD(+) + H2O = a carboxylate + NADH + 2 H(+). It catalyses the reaction octanal + NAD(+) + H2O = octanoate + NADH + 2 H(+). Its function is as follows. ALDHs play a major role in the detoxification of alcohol-derived acetaldehyde. They are involved in the metabolism of corticosteroids, biogenic amines, neurotransmitters, and lipid peroxidation. Oxidizes medium and long chain aldehydes into non-toxic fatty acids. Preferentially oxidizes aromatic aldehyde substrates. Comprises about 50 percent of corneal epithelial soluble proteins. May play a role in preventing corneal damage caused by ultraviolet light. This is Aldehyde dehydrogenase, dimeric NADP-preferring (ALDH3A1) from Bos taurus (Bovine).